A 517-amino-acid polypeptide reads, in one-letter code: Fatty acyl-CoA reductase wat (517 aa).

2 consecutive transmembrane segments (helical) span residues 378-398 (ILCF…MVII) and 492-512 (VLHY…LYAL).

Belongs to the fatty acyl-CoA reductase family.

The protein resides in the apical cell membrane. The enzyme catalyses a long-chain fatty acyl-CoA + 2 NADPH + 2 H(+) = a long-chain primary fatty alcohol + 2 NADP(+) + CoA. Catalyzes the reduction of saturated fatty acyl-CoA to fatty alcohols. The preferred substrates are C24:0 and C26:0. Necessary for the final stages of tracheal maturation, to facilitate the transition from water-filled to gas-filled tubes. May help to maintain the integrity of the outer hydrophobic envelope of the trachea. The sequence is that of Fatty acyl-CoA reductase wat from Drosophila melanogaster (Fruit fly).